Reading from the N-terminus, the 194-residue chain is Phosphoheptose isomerase (194 aa).

The region spanning 34–188 is the SIS domain; sequence LANIFTKGKK…IEGVERIMFP (155 aa). 49–51 serves as a coordination point for substrate; the sequence is NGG. Zn(2+) contacts are provided by His-58 and Glu-62. Substrate contacts are provided by residues Glu-62, 90–91, 116–118, Ser-121, and Gln-168; these read ND and STS. The Zn(2+) site is built by Gln-168 and His-176.

The protein belongs to the SIS family. GmhA subfamily. It depends on Zn(2+) as a cofactor.

It is found in the cytoplasm. It carries out the reaction 2 D-sedoheptulose 7-phosphate = D-glycero-alpha-D-manno-heptose 7-phosphate + D-glycero-beta-D-manno-heptose 7-phosphate. The protein operates within carbohydrate biosynthesis; D-glycero-D-manno-heptose 7-phosphate biosynthesis; D-glycero-alpha-D-manno-heptose 7-phosphate and D-glycero-beta-D-manno-heptose 7-phosphate from sedoheptulose 7-phosphate: step 1/1. Catalyzes the isomerization of sedoheptulose 7-phosphate in D-glycero-D-manno-heptose 7-phosphate. This is Phosphoheptose isomerase from Fusobacterium nucleatum subsp. nucleatum (strain ATCC 25586 / DSM 15643 / BCRC 10681 / CIP 101130 / JCM 8532 / KCTC 2640 / LMG 13131 / VPI 4355).